The following is a 967-amino-acid chain: Leucine--tRNA ligase (967 aa).

The short motif at 43–53 (PYLSGHLHVGH) is the 'HIGH' region element. The short motif at 650 to 654 (KMSKS) is the 'KMSKS' region element. Lys653 serves as a coordination point for ATP.

Belongs to the class-I aminoacyl-tRNA synthetase family.

It is found in the cytoplasm. It catalyses the reaction tRNA(Leu) + L-leucine + ATP = L-leucyl-tRNA(Leu) + AMP + diphosphate. This chain is Leucine--tRNA ligase, found in Pyrococcus horikoshii (strain ATCC 700860 / DSM 12428 / JCM 9974 / NBRC 100139 / OT-3).